A 313-amino-acid chain; its full sequence is Ribosomal RNA small subunit methyltransferase H (313 aa).

S-adenosyl-L-methionine-binding positions include 37–39 (GGH), Asp-57, Phe-82, Asp-104, and Gln-111.

The protein belongs to the methyltransferase superfamily. RsmH family.

The protein resides in the cytoplasm. It carries out the reaction cytidine(1402) in 16S rRNA + S-adenosyl-L-methionine = N(4)-methylcytidine(1402) in 16S rRNA + S-adenosyl-L-homocysteine + H(+). Specifically methylates the N4 position of cytidine in position 1402 (C1402) of 16S rRNA. In Alteromonas mediterranea (strain DSM 17117 / CIP 110805 / LMG 28347 / Deep ecotype), this protein is Ribosomal RNA small subunit methyltransferase H.